Reading from the N-terminus, the 189-residue chain is Ion-translocating oxidoreductase complex subunit B (189 aa).

The interval 1–26 (MSAVMIAVVLLGLLALVFGAILGFAA) is hydrophobic. In terms of domain architecture, 4Fe-4S spans 32-90 (EGDPLVDQVESLLPQTQCGQCGYPGCRPYAEAIAGGDQINKCPPGGTATMEKIAELMGV). [4Fe-4S] cluster is bound by residues Cys-49, Cys-52, Cys-57, Cys-73, Cys-114, Cys-117, Cys-120, Cys-124, Cys-144, Cys-147, Cys-150, and Cys-154. 4Fe-4S ferredoxin-type domains lie at 105–134 (KVAY…GAGK) and 136–164 (MHTV…MLPV).

This sequence belongs to the 4Fe4S bacterial-type ferredoxin family. RnfB subfamily. The complex is composed of six subunits: RnfA, RnfB, RnfC, RnfD, RnfE and RnfG. [4Fe-4S] cluster serves as cofactor.

Its subcellular location is the cell inner membrane. Its function is as follows. Part of a membrane-bound complex that couples electron transfer with translocation of ions across the membrane. The chain is Ion-translocating oxidoreductase complex subunit B from Shewanella amazonensis (strain ATCC BAA-1098 / SB2B).